Reading from the N-terminus, the 175-residue chain is Shikimate kinase (175 aa).

14 to 19 (GAGKST) contributes to the ATP binding site. S18 is a Mg(2+) binding site. Substrate is bound by residues D36, R60, and G82. Residue R120 participates in ATP binding. R140 serves as a coordination point for substrate. Residue Q157 participates in ATP binding.

This sequence belongs to the shikimate kinase family. In terms of assembly, monomer. Mg(2+) is required as a cofactor.

Its subcellular location is the cytoplasm. The enzyme catalyses shikimate + ATP = 3-phosphoshikimate + ADP + H(+). The protein operates within metabolic intermediate biosynthesis; chorismate biosynthesis; chorismate from D-erythrose 4-phosphate and phosphoenolpyruvate: step 5/7. Its function is as follows. Catalyzes the specific phosphorylation of the 3-hydroxyl group of shikimic acid using ATP as a cosubstrate. This chain is Shikimate kinase, found in Mannheimia succiniciproducens (strain KCTC 0769BP / MBEL55E).